The primary structure comprises 107 residues: Thiosulfate sulfurtransferase GlpE (107 aa).

Residues 17–105 enclose the Rhodanese domain; it reads RQGEAVLVDI…WLKAFPLETE (89 aa). Cys-65 (cysteine persulfide intermediate) is an active-site residue.

Belongs to the GlpE family.

Its subcellular location is the cytoplasm. The enzyme catalyses thiosulfate + hydrogen cyanide = thiocyanate + sulfite + 2 H(+). The catalysed reaction is thiosulfate + [thioredoxin]-dithiol = [thioredoxin]-disulfide + hydrogen sulfide + sulfite + 2 H(+). In terms of biological role, transferase that catalyzes the transfer of sulfur from thiosulfate to thiophilic acceptors such as cyanide or dithiols. May function in a CysM-independent thiosulfate assimilation pathway by catalyzing the conversion of thiosulfate to sulfite, which can then be used for L-cysteine biosynthesis. The protein is Thiosulfate sulfurtransferase GlpE of Sodalis glossinidius (strain morsitans).